The chain runs to 71 residues: uncharacterized protein (71 aa).

This is an uncharacterized protein from Vaccinia virus (strain Western Reserve) (VACV).